Reading from the N-terminus, the 137-residue chain is Golgin subfamily A member 7 (137 aa).

S-palmitoyl cysteine attachment occurs at residues C69 and C72.

Belongs to the ERF4 family. Interacts with GOLGA3. Interacts with ZDHHC9. In terms of processing, palmitoylated on Cys-69 and Cys-72; which is required for Golgi localization and interaction with GOLGA3.

The protein resides in the golgi apparatus membrane. Functionally, may be involved in protein transport from Golgi to cell surface. The ZDHHC9-GOLGA7 complex is a palmitoyltransferase specific for HRAS and NRAS. In Rattus norvegicus (Rat), this protein is Golgin subfamily A member 7 (Golga7).